Consider the following 89-residue polypeptide: Antimicrobial peptide Ar-AMP (89 aa).

Positions 1 to 25 (MVNMKSVALIVIVMMAFMMVDPSMG) are cleaved as a signal peptide. The 43-residue stretch at 26 to 68 (AGECVQGRCPSGMCCSQFGYCGRGPKYCGRASTTVDHQADAAA) folds into the Chitin-binding type-1 domain. 3 cysteine pairs are disulfide-bonded: C29–C40, C34–C46, and C39–C53. Positions 56–89 (ASTTVDHQADAAAAAATKTANNPTDAKLAGAGSP) are cleaved as a propeptide — removed in mature form.

Its function is as follows. Chitin-binding protein that inhibits the growth of the fungal pathogens B.cinerea, F.culmorum, H.sativum and A.consortiale, but not that of R.solani. Induces morphological changes in the fungal pathogens F.culmorum, H.sativum and R.solani, but not in A.consortiale and B.cinerea. Has antibacterial activity against the Gram-positive bacterium B.subtilis, but lacks antibacterial activity against the Gram-negative bacterium E.coli. This is Antimicrobial peptide Ar-AMP from Amaranthus retroflexus (Redroot amaranth).